A 240-amino-acid chain; its full sequence is Ribosomal RNA small subunit methyltransferase G (240 aa).

Residues G80, F85, 103 to 105, 131 to 132, and R150 contribute to the S-adenosyl-L-methionine site; these read DSS and AE.

It belongs to the methyltransferase superfamily. RNA methyltransferase RsmG family.

The protein localises to the cytoplasm. Specifically methylates the N7 position of a guanine in 16S rRNA. The polypeptide is Ribosomal RNA small subunit methyltransferase G (Thermoanaerobacter pseudethanolicus (strain ATCC 33223 / 39E) (Clostridium thermohydrosulfuricum)).